Consider the following 247-residue polypeptide: Pyridoxine 5'-phosphate synthase (247 aa).

Asn12 lines the 3-amino-2-oxopropyl phosphate pocket. 1-deoxy-D-xylulose 5-phosphate is bound at residue 14-15 (DH). Arg23 lines the 3-amino-2-oxopropyl phosphate pocket. Catalysis depends on His48, which acts as the Proton acceptor. Positions 50 and 55 each coordinate 1-deoxy-D-xylulose 5-phosphate. The active-site Proton acceptor is the Glu75. A 1-deoxy-D-xylulose 5-phosphate-binding site is contributed by Thr105. The Proton donor role is filled by His196. Residues Gly197 and 218–219 (GH) each bind 3-amino-2-oxopropyl phosphate.

Belongs to the PNP synthase family. As to quaternary structure, homooctamer; tetramer of dimers.

It is found in the cytoplasm. The catalysed reaction is 3-amino-2-oxopropyl phosphate + 1-deoxy-D-xylulose 5-phosphate = pyridoxine 5'-phosphate + phosphate + 2 H2O + H(+). The protein operates within cofactor biosynthesis; pyridoxine 5'-phosphate biosynthesis; pyridoxine 5'-phosphate from D-erythrose 4-phosphate: step 5/5. Catalyzes the complicated ring closure reaction between the two acyclic compounds 1-deoxy-D-xylulose-5-phosphate (DXP) and 3-amino-2-oxopropyl phosphate (1-amino-acetone-3-phosphate or AAP) to form pyridoxine 5'-phosphate (PNP) and inorganic phosphate. The protein is Pyridoxine 5'-phosphate synthase of Pseudomonas fluorescens (strain SBW25).